The primary structure comprises 254 residues: Thiazole synthase (254 aa).

Catalysis depends on Lys-95, which acts as the Schiff-base intermediate with DXP. 1-deoxy-D-xylulose 5-phosphate contacts are provided by residues Gly-156, 182 to 183 (AG), and 204 to 205 (NT).

The protein belongs to the ThiG family. In terms of assembly, homotetramer. Forms heterodimers with either ThiH or ThiS.

The protein localises to the cytoplasm. It catalyses the reaction [ThiS sulfur-carrier protein]-C-terminal-Gly-aminoethanethioate + 2-iminoacetate + 1-deoxy-D-xylulose 5-phosphate = [ThiS sulfur-carrier protein]-C-terminal Gly-Gly + 2-[(2R,5Z)-2-carboxy-4-methylthiazol-5(2H)-ylidene]ethyl phosphate + 2 H2O + H(+). Its pathway is cofactor biosynthesis; thiamine diphosphate biosynthesis. Functionally, catalyzes the rearrangement of 1-deoxy-D-xylulose 5-phosphate (DXP) to produce the thiazole phosphate moiety of thiamine. Sulfur is provided by the thiocarboxylate moiety of the carrier protein ThiS. In vitro, sulfur can be provided by H(2)S. In Vibrio atlanticus (strain LGP32) (Vibrio splendidus (strain Mel32)), this protein is Thiazole synthase.